Reading from the N-terminus, the 382-residue chain is Succinate--CoA ligase [ADP-forming] subunit beta (382 aa).

An ATP-grasp domain is found at 9–236 (KEVFADAGIP…DAAEDDLEAK (228 aa)). Residues Lys45, 52-54 (GRG), Glu91, Val94, and Glu99 each bind ATP. Mg(2+) is bound by residues Asn191 and Asp205. Substrate-binding positions include Asn256 and 313-315 (GIT).

Belongs to the succinate/malate CoA ligase beta subunit family. Heterotetramer of two alpha and two beta subunits. Requires Mg(2+) as cofactor.

The catalysed reaction is succinate + ATP + CoA = succinyl-CoA + ADP + phosphate. It catalyses the reaction GTP + succinate + CoA = succinyl-CoA + GDP + phosphate. Its pathway is carbohydrate metabolism; tricarboxylic acid cycle; succinate from succinyl-CoA (ligase route): step 1/1. Functionally, succinyl-CoA synthetase functions in the citric acid cycle (TCA), coupling the hydrolysis of succinyl-CoA to the synthesis of either ATP or GTP and thus represents the only step of substrate-level phosphorylation in the TCA. The beta subunit provides nucleotide specificity of the enzyme and binds the substrate succinate, while the binding sites for coenzyme A and phosphate are found in the alpha subunit. The polypeptide is Succinate--CoA ligase [ADP-forming] subunit beta (Halobacterium salinarum (strain ATCC 29341 / DSM 671 / R1)).